The chain runs to 1174 residues: Lysylphosphatidylglycerol biosynthesis bifunctional protein LysX (1174 aa).

The tract at residues 1 to 665 (MGVGLHLTVP…LLHHDGSAPD (665 aa)) is phosphatidylglycerol lysyltransferase. The segment at 9–36 (VPGLRRDGRGVQSNSHDTSSKTTADISR) is disordered. Positions 19–33 (VQSNSHDTSSKTTAD) are enriched in polar residues. The next 7 membrane-spanning stretches (helical) occupy residues 82-102 (VPAA…LASV), 124-144 (FPDT…ALTA), 148-168 (IAWL…AAEI), 179-199 (FGEN…VLGY), 216-236 (AVWL…VELF), 274-294 (AIFG…LFLS), and 614-634 (VIPR…LPFS). Positions 666–1174 (VSGLRQVGLT…TLPFPLAKPH (509 aa)) are lysine--tRNA ligase. Residues 728 to 806 (VSVSGRIMRI…SLIVSGWRLI (79 aa)) constitute a DNA-binding region (OB). The Mg(2+) site is built by D1086 and E1093.

In the N-terminal section; belongs to the LPG synthetase family. It in the C-terminal section; belongs to the class-II aminoacyl-tRNA synthetase family. Requires Mg(2+) as cofactor.

The protein localises to the cell membrane. The catalysed reaction is tRNA(Lys) + L-lysine + ATP = L-lysyl-tRNA(Lys) + AMP + diphosphate. The enzyme catalyses L-lysyl-tRNA(Lys) + a 1,2-diacyl-sn-glycero-3-phospho-(1'-sn-glycerol) = a 1,2-diacyl-sn-glycero-3-phospho-1'-(3'-O-L-lysyl)-sn-glycerol + tRNA(Lys). Functionally, catalyzes the production of L-lysyl-tRNA(Lys)transfer and the transfer of a lysyl group from L-lysyl-tRNA(Lys) to membrane-bound phosphatidylglycerol (PG), which produces lysylphosphatidylglycerol (LPG), one of the components of the bacterial membrane with a positive net charge. LPG synthesis contributes to the resistance to cationic antimicrobial peptides (CAMPs) and likely protects M.tuberculosis against the CAMPs produced by competiting microorganisms (bacteriocins). In fact, the modification of anionic phosphatidylglycerol with positively charged L-lysine results in repulsion of the peptides. In Mycobacterium tuberculosis (strain KZN 1435 / MDR), this protein is Lysylphosphatidylglycerol biosynthesis bifunctional protein LysX (lysX).